Consider the following 1347-residue polypeptide: Ubinuclein-2 (1347 aa).

The interval 1–134 (MAEPRRVAFI…ETVRLELVLK (134 aa)) is disordered. Ser-13 carries the post-translational modification Phosphoserine. 2 stretches are compositionally biased toward basic and acidic residues: residues 16 to 37 (RRRE…EPPR) and 67 to 79 (SREK…EVSR). Positions 93-110 (PEPPPPFPPLPLQPPPPR) are enriched in pro residues. Basic and acidic residues predominate over residues 122 to 134 (PPRETVRLELVLK). The residue at position 243 (Thr-243) is a Phosphothreonine. The residue at position 250 (Ser-250) is a Phosphoserine. Positions 250-301 (SDTEEDDITDNQKHKPPKVPKIKEDDIEMKKRKRKEEGEKEKKPRKKVPKQL) are disordered. The residue at position 252 (Thr-252) is a Phosphothreonine. Lys-272 participates in a covalent cross-link: Glycyl lysine isopeptide (Lys-Gly) (interchain with G-Cter in SUMO2). Ser-311, Ser-416, Ser-419, Ser-422, and Ser-584 each carry phosphoserine. 6 disordered regions span residues 573-597 (LQTD…KRVI), 707-740 (ECSP…AAAS), 815-849 (LATP…DLAH), 880-913 (GLQR…HALG), 981-1006 (RLPL…TVPS), and 1035-1218 (ASPK…SSVV). Residues 574–584 (QTDEEREKNGS) are compositionally biased toward basic and acidic residues. The segment covering 721 to 740 (VASVSGPPTSSSTAAIAAAS) has biased composition (low complexity). Positions 823 to 832 (STQTTHSSSL) are enriched in polar residues. Over residues 880–911 (GLQRSSQIHTSSSSQTHVSSSSQAQIAASSHA) the composition is skewed to low complexity. The segment covering 985–996 (STPSPGNGSQGS) has biased composition (polar residues). Over residues 1035-1045 (ASPKLAASPKP) the composition is skewed to low complexity. The span at 1046–1060 (ATSPKPLPSPKPSAS) shows a compositional bias: pro residues. 2 stretches are compositionally biased toward low complexity: residues 1061-1070 (PKPSLSAKPS) and 1077-1095 (SKSN…SSPN). An N6-acetyllysine modification is found at Lys-1068. Composition is skewed to polar residues over residues 1101–1164 (GSHS…NSLS) and 1174–1185 (RGSNLNSSGANR). At Ser-1123 the chain carries Phosphoserine. Residue Lys-1148 is modified to N6-acetyllysine.

Belongs to the ubinuclein family. In terms of tissue distribution, expressed in several cell lines tested, including primary and transformed cell lines.

The polypeptide is Ubinuclein-2 (UBN2) (Homo sapiens (Human)).